The chain runs to 494 residues: Peptidyl-prolyl cis-trans isomerase-like 4 (494 aa).

A PPIase cyclophilin-type domain is found at 1–172; sequence MSVLLETSAG…VDIRIKHTVI (172 aa). Positions 176-196 are disordered; it reads PYPDPAGMREPSASPPPSKAQ. The stretch at 206 to 240 forms a coiled coil; it reads EELLDVEASEEAAAEAERRRREREAAAQALTLEMM. Residues 253-331 enclose the RRM domain; it reads NVLFVCKLNP…RRIHVDFSQS (79 aa). 2 stretches are compositionally biased toward basic and acidic residues: residues 391–418 and 425–494; these read DLKG…DRST and PRRD…YRRR. The interval 391 to 494 is disordered; sequence DLKGRHDGDK…NRGRDDYRRR (104 aa).

It belongs to the cyclophilin-type PPIase family. PPIL4 subfamily.

The protein resides in the nucleus. The catalysed reaction is [protein]-peptidylproline (omega=180) = [protein]-peptidylproline (omega=0). Its function is as follows. PPIases accelerate the folding of proteins. It catalyzes the cis-trans isomerization of proline imidic peptide bonds in oligopeptides. The sequence is that of Peptidyl-prolyl cis-trans isomerase-like 4 (cyp-6) from Neurospora crassa (strain ATCC 24698 / 74-OR23-1A / CBS 708.71 / DSM 1257 / FGSC 987).